The sequence spans 548 residues: Beta-caryophyllene synthase (548 aa).

Residues arginine 268, aspartate 305, aspartate 309, arginine 446, and aspartate 449 each coordinate (2E,6E)-farnesyl diphosphate. Mg(2+) is bound by residues aspartate 305 and aspartate 309. The short motif at 305 to 309 is the DDXXD motif element; it reads DDIYD. Mg(2+)-binding residues include aspartate 449 and glutamate 457.

The protein belongs to the terpene synthase family. Mg(2+) serves as cofactor.

It carries out the reaction (2E,6E)-farnesyl diphosphate = (-)-(E)-beta-caryophyllene + diphosphate. It functions in the pathway secondary metabolite biosynthesis; terpenoid biosynthesis. In terms of biological role, sesquiterpene synthase that catalyzes the formation of sesquiterpenes and sesquiterpenoid alcohols. Converts farnesyl diphosphate (FPP) to beta-caryophyllene. Can use geranyl diphosphate (GPP) to produce myrcene, limonene and camphene. In Lavandula angustifolia (Lavender), this protein is Beta-caryophyllene synthase.